A 1309-amino-acid polypeptide reads, in one-letter code: MVVPGRRTVWDCVIELTKMAQENCVDPRLWASQLSSNLKFFAVELPSTELAEVIVSYICWDNNVPIVWKFLERAMALKLVSPLVVLALLADRVVPTRSTQQAAYRIYLELLKRNMFTIKDHISGPHYQKVMISVSNILRLSELFDLDTSKPGVLLVEFVFKMVSQLLDAALSDEGLLELSQDSSSQWLVKSQDMEIDAPERYNEKTGSLEKLQSLNTIMAIELIAEFLRNTVIARLLYLVSSNRASKWHEFVQKVQLLGENSSALKHSKVLNSGDLLQLISNRRFGYSYDSKVTSARKSNAIVDFGSLSSYAGLCHGASLSSLWLPLDLVFEDAMDGYQVNPTSAIEIITGLAKTLKEINGSTWHDTFLGLWIAALRLVQRERDPIEGPIPRLDTRLCMSLCIVPLVVANLIEEGKYESVMEKLRDDLVTSLQVLGDFPGLLAPPKCVVSAANKAATKAILFLSGGNVGKSCFDVINMKDMPVNCSGNMRHLIVEACIARNILDMSAYSWPGYVNGRINQIPQSLPNEVPCWSSFVKGAPLNAAMVNTLVSVPASSLAELEKLFEVAVKGSDDEKISAATVLCGASLTRGWNIQEHTVEYLTRLLSPPVPADYSRAENHLIGYACMLNVVIVGIGSVDSIQIFSLHGMVPQLACSLMPICEEFGSYTPSVSWTLPSGEAISAYSVFSNAFTLLLKLWRFNHPPIEHGVGDVPTVGSQLTPEHLLSVRNSYLVSSEILDRDRNRKRLSEVARAASCQPVFVDSFPKLKVWYRQHQRCIAATLSGLTHGSPVHQTVEALLNMTFGKVRGSQTLNPVNSGTSSSSGAASEDSNIRPEFPAWDILKAVPYVVDAALTACTHGRLSPRQLATGLKDLADFLPASLATIVSYFSAEVSRGVWKPVFMNGVDWPSPATNLSTVEEYITKILATTGVDIPSLAPGGSSPATLPLPLAAFVSLTITYKIDKASERFLNLAGPALECLAAGCPWPCMPIVASLWTQKAKRWFDFLVFSASRTVFLHNQDAVIQLLRNCFSATLGLNAAPMSNDGGVGALLGHGFGSHFYGGISPVAPGILYLRMYRALRDTVSVSEEILSLLIHSVEDIAQNRLSKEKLEKLKTVKNGSRYGQSSLATAMTQVKLAASLSASLVWLTGGLGVVHVLIKETIPSWFLSTDKSDREQGPSDLVAELRGHALAYFVVLCGALTWGVDSRSSASKRRRQAILGSHLEFIASALDGKISVGCETATWRTYISGLVSLMVSCLPLWVTEIDTEVLKSLSNGLRKWGKDELAIVLLSLGGLKTMDYAADFIIHLRS.

Residues 809–829 (QTLNPVNSGTSSSSGAASEDS) form a disordered region. Over residues 816-826 (SGTSSSSGAAS) the composition is skewed to low complexity.

The protein belongs to the Mediator complex subunit 33 family. As to quaternary structure, component of the Mediator complex.

It localises to the nucleus. In terms of biological role, component of the Mediator complex, a coactivator involved in the regulated transcription of nearly all RNA polymerase II-dependent genes. Mediator functions as a bridge to convey information from gene-specific regulatory proteins to the basal RNA polymerase II transcription machinery. The Mediator complex, having a compact conformation in its free form, is recruited to promoters by direct interactions with regulatory proteins and serves for the assembly of a functional preinitiation complex with RNA polymerase II and the general transcription factors. Involved in the repression of phenylpropanoid biosynthesis. May compete with MED33B for common binding partners or for occupancy in Mediator. This Arabidopsis thaliana (Mouse-ear cress) protein is Mediator of RNA polymerase II transcription subunit 33A (MED33A).